We begin with the raw amino-acid sequence, 181 residues long: DNA-packaging protein NU1 homolog (181 aa).

The protein to phage lambda DNA packaging protein NU1.

The chain is DNA-packaging protein NU1 homolog (nohD) from Escherichia coli (strain K12).